The following is a 507-amino-acid chain: Probable Xaa-Pro aminopeptidase HCBG_01484 (507 aa).

Mn(2+)-binding residues include Asp-283, Asp-294, Glu-431, and Glu-469.

The protein belongs to the peptidase M24B family. Mn(2+) serves as cofactor.

The enzyme catalyses Release of any N-terminal amino acid, including proline, that is linked to proline, even from a dipeptide or tripeptide.. In terms of biological role, catalyzes the removal of a penultimate prolyl residue from the N-termini of peptides. The protein is Probable Xaa-Pro aminopeptidase HCBG_01484 of Ajellomyces capsulatus (strain G186AR / H82 / ATCC MYA-2454 / RMSCC 2432) (Darling's disease fungus).